The primary structure comprises 173 residues: NAD(P)H-quinone oxidoreductase subunit J (173 aa).

Belongs to the complex I 30 kDa subunit family. In terms of assembly, NDH-1 can be composed of about 15 different subunits; different subcomplexes with different compositions have been identified which probably have different functions.

It is found in the cellular thylakoid membrane. It carries out the reaction a plastoquinone + NADH + (n+1) H(+)(in) = a plastoquinol + NAD(+) + n H(+)(out). The catalysed reaction is a plastoquinone + NADPH + (n+1) H(+)(in) = a plastoquinol + NADP(+) + n H(+)(out). Functionally, NDH-1 shuttles electrons from an unknown electron donor, via FMN and iron-sulfur (Fe-S) centers, to quinones in the respiratory and/or the photosynthetic chain. The immediate electron acceptor for the enzyme in this species is believed to be plastoquinone. Couples the redox reaction to proton translocation, and thus conserves the redox energy in a proton gradient. Cyanobacterial NDH-1 also plays a role in inorganic carbon-concentration. The sequence is that of NAD(P)H-quinone oxidoreductase subunit J from Prochlorococcus marinus (strain NATL2A).